A 218-amino-acid chain; its full sequence is UPF0502 protein Geob_1184 (218 aa).

The protein belongs to the UPF0502 family.

This Geotalea daltonii (strain DSM 22248 / JCM 15807 / FRC-32) (Geobacter daltonii) protein is UPF0502 protein Geob_1184.